A 125-amino-acid chain; its full sequence is Mesotocin-neurophysin MT (125 aa).

Residues 1-19 (MSYTALAVTFFGWLALSSA) form the signal peptide. A disulfide bond links Cys20 and Cys25. At Gly28 the chain carries Glycine amide. Intrachain disulfides connect Cys42–Cys86, Cys45–Cys59, Cys53–Cys76, Cys60–Cys66, Cys93–Cys106, Cys100–Cys118, and Cys107–Cys112.

Belongs to the vasopressin/oxytocin family. Mesotocin is produced by magnocellular preoptic neurons in the hypothalamus in amphibians, reptiles and birds.

The protein resides in the secreted. Mesotocin is a diuretic hormone. This chain is Mesotocin-neurophysin MT, found in Bufo japonicus (Japanese common toad).